The primary structure comprises 203 residues: MSRYTGPSWKQSRRLGLSLTGTGKELARRNYVPGQHGPNNRSKLSEYGLQLAEKQKLRFSYGLGEKQFRNLFVQATKIKEGTLGFNFMVLLERRLDNVVYRLGLATTRRQARQFVNHGHILVDGKRVDIPSYRVDPGQVISVREKSMKVPAILEAVEATLGRPAFVSFDAEKLEGSLTRLPERDEINPEINEALVVEFYNKML.

The 64-residue stretch at 93–156 (RRLDNVVYRL…MKVPAILEAV (64 aa)) folds into the S4 RNA-binding domain.

Belongs to the universal ribosomal protein uS4 family. In terms of assembly, part of the 30S ribosomal subunit. Contacts protein S5. The interaction surface between S4 and S5 is involved in control of translational fidelity.

One of the primary rRNA binding proteins, it binds directly to 16S rRNA where it nucleates assembly of the body of the 30S subunit. Functionally, with S5 and S12 plays an important role in translational accuracy. This chain is Small ribosomal subunit protein uS4, found in Streptococcus pyogenes serotype M1.